Here is a 556-residue protein sequence, read N- to C-terminus: Formate--tetrahydrofolate ligase (556 aa).

65 to 72 (TPAGEGKS) contacts ATP.

The protein belongs to the formate--tetrahydrofolate ligase family.

The catalysed reaction is (6S)-5,6,7,8-tetrahydrofolate + formate + ATP = (6R)-10-formyltetrahydrofolate + ADP + phosphate. The protein operates within one-carbon metabolism; tetrahydrofolate interconversion. This is Formate--tetrahydrofolate ligase from Streptococcus pneumoniae (strain Taiwan19F-14).